Here is an 80-residue protein sequence, read N- to C-terminus: Exodeoxyribonuclease 7 small subunit (80 aa).

This sequence belongs to the XseB family. Heterooligomer composed of large and small subunits.

The protein localises to the cytoplasm. It catalyses the reaction Exonucleolytic cleavage in either 5'- to 3'- or 3'- to 5'-direction to yield nucleoside 5'-phosphates.. Functionally, bidirectionally degrades single-stranded DNA into large acid-insoluble oligonucleotides, which are then degraded further into small acid-soluble oligonucleotides. This chain is Exodeoxyribonuclease 7 small subunit, found in Rickettsia massiliae (strain Mtu5).